The chain runs to 418 residues: Gamma-glutamyl phosphate reductase (418 aa).

Belongs to the gamma-glutamyl phosphate reductase family.

It localises to the cytoplasm. The catalysed reaction is L-glutamate 5-semialdehyde + phosphate + NADP(+) = L-glutamyl 5-phosphate + NADPH + H(+). It participates in amino-acid biosynthesis; L-proline biosynthesis; L-glutamate 5-semialdehyde from L-glutamate: step 2/2. Catalyzes the NADPH-dependent reduction of L-glutamate 5-phosphate into L-glutamate 5-semialdehyde and phosphate. The product spontaneously undergoes cyclization to form 1-pyrroline-5-carboxylate. This Thermodesulfovibrio yellowstonii (strain ATCC 51303 / DSM 11347 / YP87) protein is Gamma-glutamyl phosphate reductase.